Here is a 238-residue protein sequence, read N- to C-terminus: Citrate-binding protein (238 aa).

An N-terminal signal peptide occupies residues 1-31 (MKMKRSPYCFCCSFALLLLVSFLKDRHFCSA). A propeptide spans 225–238 (LEGCNNNHGTWLVQ) (removed in mature form).

The protein resides in the vacuole. In terms of biological role, may be a subunit of a vacuolar malate and citrate transporter. This Hevea brasiliensis (Para rubber tree) protein is Citrate-binding protein (CBP).